The chain runs to 310 residues: L-lactate dehydrogenase (310 aa).

NAD(+) is bound by residues V11, D32, and R37. Substrate contacts are provided by residues Q79, R85, and 117-120 (NPVD). NAD(+) is bound by residues 115 to 117 (VTN) and T140. 145 to 148 (DTAR) lines the substrate pocket. Residues R150 and H165 each coordinate beta-D-fructose 1,6-bisphosphate. H172 (proton acceptor) is an active-site residue. Position 221 is a phosphotyrosine (Y221). Residue T230 participates in substrate binding.

It belongs to the LDH/MDH superfamily. LDH family. Homotetramer.

It localises to the cytoplasm. It carries out the reaction (S)-lactate + NAD(+) = pyruvate + NADH + H(+). It participates in fermentation; pyruvate fermentation to lactate; (S)-lactate from pyruvate: step 1/1. With respect to regulation, allosterically activated by fructose 1,6-bisphosphate (FBP). In terms of biological role, catalyzes the conversion of lactate to pyruvate. The protein is L-lactate dehydrogenase of Fervidobacterium nodosum (strain ATCC 35602 / DSM 5306 / Rt17-B1).